Consider the following 248-residue polypeptide: Thioesterase FSL2 (248 aa).

Residues Ser125, Asp195, and His223 each act as charge relay system in the active site.

It belongs to the LovG family.

It participates in secondary metabolite biosynthesis. In terms of biological role, thioesterase; part of the gene cluster that mediates the biosynthesis of fusarielins F, G and H, decaketide compounds with 5 methylations and a decaline core that act as mycoestrogens as they stimulate growth of MCF-7 breast cancer cells. The initial compound in the pathway is produced by the reducing polyketide synthase FSL1. FSL1 lacks an active enoyl reductase (ER) domain and biosynthesis of fusarielins relies on the trans-acting enoyl reductase FSL5, before it is released through hydrolysis catalyzed by the thioesterase FSL2. Fusarielins F, G, and H have a C11=C12 cis double bond and is fully reduced between C10 and C11 and between C12 and C13. FSL3 can be involved in the formation of the C11=C12 cis double bond by moving a hypothetical C10=C11 or C12=C13 trans double bond to form prefusarielin. Prefusarielin is oxygenated at C15 and C16 by the cytochrome P450 monooxygenase FSL4, resulting in fusarielin F, which subsequently is epoxidized into fusarielin G by the same enzyme. The final step in the pathway is a reduction of the carboxylic acid moiety to yield fusarielin H via a still undetermined mechanism. The polypeptide is Thioesterase FSL2 (Gibberella zeae (strain ATCC MYA-4620 / CBS 123657 / FGSC 9075 / NRRL 31084 / PH-1) (Wheat head blight fungus)).